The chain runs to 126 residues: Acidic phospholipase A2 3 (126 aa).

Positions 1-7 are excised as a propeptide; that stretch reads SNRPMPL. Disulfide bonds link C18–C78, C33–C125, C35–C51, C50–C106, C57–C99, C67–C92, and C85–C97. Residues Y34, G36, and G38 each coordinate Ca(2+). H54 is an active-site residue. D55 contributes to the Ca(2+) binding site. D100 is a catalytic residue.

The protein belongs to the phospholipase A2 family. Group I subfamily. D49 sub-subfamily. Requires Ca(2+) as cofactor. Expressed by the venom gland.

Its subcellular location is the secreted. The catalysed reaction is a 1,2-diacyl-sn-glycero-3-phosphocholine + H2O = a 1-acyl-sn-glycero-3-phosphocholine + a fatty acid + H(+). PLA2 catalyzes the calcium-dependent hydrolysis of the 2-acyl groups in 3-sn-phosphoglycerides. The protein is Acidic phospholipase A2 3 of Naja sagittifera (Andaman cobra).